A 564-amino-acid polypeptide reads, in one-letter code: Juvenile hormone esterase (564 aa).

The first 19 residues, 1-19, serve as a signal peptide directing secretion; that stretch reads MTSHVLALAFLLHACTALA. An N-linked (GlcNAc...) asparagine glycan is attached at N81. A disulfide bridge connects residues C89 and C109. N-linked (GlcNAc...) asparagine glycosylation occurs at N180. The Acyl-ester intermediate role is filled by S220. E351 functions as the Charge relay system in the catalytic mechanism. N402 carries an N-linked (GlcNAc...) asparagine glycan. H465 acts as the Charge relay system in catalysis. N515 carries N-linked (GlcNAc...) asparagine glycosylation.

This sequence belongs to the type-B carboxylesterase/lipase family.

The enzyme catalyses juvenile hormone I + H2O = juvenile hormone I carboxylate + methanol + H(+). It carries out the reaction juvenile hormone III + H2O = juvenile hormone III carboxylate + methanol + H(+). Its function is as follows. JH esterase plays a crucial role in the decrease of JH activity in lepidopteran insects, by hydrolyzing the methyl ester of JH. It is also involved in the transport of JH. The protein is Juvenile hormone esterase of Heliothis virescens (Tobacco budworm moth).